A 156-amino-acid chain; its full sequence is Large ribosomal subunit protein uL22 (156 aa).

The protein belongs to the universal ribosomal protein uL22 family. In terms of assembly, part of the 50S ribosomal subunit.

Functionally, this protein binds specifically to 23S rRNA. It makes multiple contacts with different domains of the 23S rRNA in the assembled 50S subunit and ribosome. The globular domain of the protein is located near the polypeptide exit tunnel on the outside of the subunit, while an extended beta-hairpin is found that lines the wall of the exit tunnel in the center of the 70S ribosome. In Hyperthermus butylicus (strain DSM 5456 / JCM 9403 / PLM1-5), this protein is Large ribosomal subunit protein uL22.